The following is a 242-amino-acid chain: ATP synthase subunit a (242 aa).

Helical transmembrane passes span 21-41 (LSSILMILVTAFLVFLLAIIC), 83-103 (AVTLILYIFIANMLGLPFSIV), 117-137 (DATVTLTLSTTIILLTHFYGI), 175-195 (LYGNIFAGEILLTLLAGLFFN), and 198-218 (AWGWIISIPGLIVWQAFSIFV).

It belongs to the ATPase A chain family. As to quaternary structure, F-type ATPases have 2 components, CF(1) - the catalytic core - and CF(0) - the membrane proton channel. CF(1) has five subunits: alpha(3), beta(3), gamma(1), delta(1), epsilon(1). CF(0) has three main subunits: a(1), b(2) and c(9-12). The alpha and beta chains form an alternating ring which encloses part of the gamma chain. CF(1) is attached to CF(0) by a central stalk formed by the gamma and epsilon chains, while a peripheral stalk is formed by the delta and b chains.

The protein resides in the cell membrane. Functionally, key component of the proton channel; it plays a direct role in the translocation of protons across the membrane. The chain is ATP synthase subunit a from Staphylococcus aureus (strain Newman).